The sequence spans 433 residues: LanC-like protein GCL1 (433 aa).

The interval 1–22 (MSSSVDFVTEQGRCGDDGNGAG) is disordered.

The protein belongs to the LanC-like protein family.

May play a role in signaling. May be not involved in abscisic acid (ABA) signaling. The polypeptide is LanC-like protein GCL1 (GCL1) (Arabidopsis thaliana (Mouse-ear cress)).